The sequence spans 233 residues: Large ribosomal subunit protein uL3 (233 aa).

Residues 146–171 (GSQRASHGNSRSHRVPGSIGQAQDPG) are disordered. At Gln-168 the chain carries N5-methylglutamine.

This sequence belongs to the universal ribosomal protein uL3 family. As to quaternary structure, part of the 50S ribosomal subunit. Forms a cluster with proteins L14 and L19. Post-translationally, methylated by PrmB.

Its function is as follows. One of the primary rRNA binding proteins, it binds directly near the 3'-end of the 23S rRNA, where it nucleates assembly of the 50S subunit. The chain is Large ribosomal subunit protein uL3 from Bordetella bronchiseptica (strain ATCC BAA-588 / NCTC 13252 / RB50) (Alcaligenes bronchisepticus).